The chain runs to 411 residues: Argininosuccinate synthase (411 aa).

ATP contacts are provided by residues 10–18 (AYSGGLDTS) and A37. L-citrulline contacts are provided by Y89 and S94. G119 lines the ATP pocket. T121, N125, and D126 together coordinate L-aspartate. Residue N125 coordinates L-citrulline. L-citrulline contacts are provided by R129, S178, S187, E263, and Y275.

Belongs to the argininosuccinate synthase family. Type 1 subfamily. Homotetramer.

The protein localises to the cytoplasm. The enzyme catalyses L-citrulline + L-aspartate + ATP = 2-(N(omega)-L-arginino)succinate + AMP + diphosphate + H(+). Its pathway is amino-acid biosynthesis; L-arginine biosynthesis; L-arginine from L-ornithine and carbamoyl phosphate: step 2/3. In Aeromonas salmonicida (strain A449), this protein is Argininosuccinate synthase.